A 149-amino-acid polypeptide reads, in one-letter code: Endoribonuclease YbeY (149 aa).

Zn(2+)-binding residues include H106, H110, and H116.

It belongs to the endoribonuclease YbeY family. Zn(2+) is required as a cofactor.

It is found in the cytoplasm. Functionally, single strand-specific metallo-endoribonuclease involved in late-stage 70S ribosome quality control and in maturation of the 3' terminus of the 16S rRNA. The polypeptide is Endoribonuclease YbeY (Methylobacillus flagellatus (strain ATCC 51484 / DSM 6875 / VKM B-1610 / KT)).